Reading from the N-terminus, the 130-residue chain is Large ribosomal subunit protein bL12 (130 aa).

The protein belongs to the bacterial ribosomal protein bL12 family. Homodimer. Part of the ribosomal stalk of the 50S ribosomal subunit. Forms a multimeric L10(L12)X complex, where L10 forms an elongated spine to which 2 to 4 L12 dimers bind in a sequential fashion. Binds GTP-bound translation factors.

Functionally, forms part of the ribosomal stalk which helps the ribosome interact with GTP-bound translation factors. Is thus essential for accurate translation. The protein is Large ribosomal subunit protein bL12 of Mycolicibacterium paratuberculosis (strain ATCC BAA-968 / K-10) (Mycobacterium paratuberculosis).